Here is a 552-residue protein sequence, read N- to C-terminus: HTH-type transcriptional regulator SgrR (552 aa).

An HTH marR-type domain is found at 1 to 116; the sequence is MPSGRLQQQF…LISHLGRSFR (116 aa). The segment at residues 26 to 49 is a DNA-binding region (H-T-H motif); that stretch reads LNELADLLNCSRRHMRTLLNTMQA. The tract at residues 163–493 is solute-binding; sequence ELEADIAHHW…RDWQGDAAQW (331 aa).

Its function is as follows. Activates the small RNA gene sgrS under glucose-phosphate stress conditions as well as yfdZ. Represses its own transcription under both stress and non-stress conditions. Might act as a sensor of the intracellular accumulation of phosphoglucose by binding these molecules in its C-terminal solute-binding domain. The protein is HTH-type transcriptional regulator SgrR of Salmonella typhimurium (strain LT2 / SGSC1412 / ATCC 700720).